The sequence spans 398 residues: Probable aminomethyltransferase (398 aa).

Belongs to the GcvT family. In terms of assembly, the glycine cleavage system is composed of four proteins: P, T, L and H.

The catalysed reaction is N(6)-[(R)-S(8)-aminomethyldihydrolipoyl]-L-lysyl-[protein] + (6S)-5,6,7,8-tetrahydrofolate = N(6)-[(R)-dihydrolipoyl]-L-lysyl-[protein] + (6R)-5,10-methylene-5,6,7,8-tetrahydrofolate + NH4(+). The glycine cleavage system catalyzes the degradation of glycine. This chain is Probable aminomethyltransferase, found in Thermococcus gammatolerans (strain DSM 15229 / JCM 11827 / EJ3).